The following is a 118-amino-acid chain: MTHAHITTWVVALILFVVAIALQAKGHEKTKMLHMLLRLFYILIIATGAWILHSMSSFPFLYIVKVIVGLWVIGTMEMILVRTAKGKNTNVLWLQFIVAFVVVLYLGFKLPFGFSFFS.

The next 4 membrane-spanning stretches (helical) occupy residues 4–24 (AHIT…ALQA), 32–52 (MLHM…AWIL), 60–80 (FLYI…EMIL), and 96–116 (FIVA…GFSF).

It belongs to the UPF0344 family.

The protein resides in the cell membrane. The sequence is that of UPF0344 protein Aflv_2205 from Anoxybacillus flavithermus (strain DSM 21510 / WK1).